A 403-amino-acid chain; its full sequence is Phosphoglycerate kinase (403 aa).

Substrate is bound by residues 24-26, arginine 39, 62-65, arginine 121, and arginine 161; these read DLN and HLGR. ATP is bound by residues lysine 211, glycine 299, glutamate 330, and 359 to 362; that span reads GGDS.

The protein belongs to the phosphoglycerate kinase family. As to quaternary structure, monomer.

It is found in the cytoplasm. It catalyses the reaction (2R)-3-phosphoglycerate + ATP = (2R)-3-phospho-glyceroyl phosphate + ADP. The protein operates within carbohydrate degradation; glycolysis; pyruvate from D-glyceraldehyde 3-phosphate: step 2/5. The polypeptide is Phosphoglycerate kinase (Corynebacterium kroppenstedtii (strain DSM 44385 / JCM 11950 / CIP 105744 / CCUG 35717)).